A 560-amino-acid chain; its full sequence is Mitochondria-eating protein (560 aa).

Residues 1 to 294 (MADNLRKLVS…SHSRNHSRSR (294 aa)) form an interaction with YWHAG/14-3-3 protein gamma region. S13, S85, S156, and S159 each carry phosphoserine. Coiled-coil stretches lie at residues 118-186 (DRNI…SRHR) and 223-248 (DYEK…LQGR). 2 disordered regions span residues 178–217 (QAQE…AQRK) and 243–316 (SVLQ…AKLS). Over residues 181–209 (EESRHRPPEHRSSEKRGSERRRVEPRGAD) the composition is skewed to basic and acidic residues. The span at 248-262 (RSTRSRSPSPASCSR) shows a compositional bias: low complexity. The segment covering 263–293 (SRSHSHSRSRSHSHSRSGSHSRSHSRNHSRS) has biased composition (basic residues). Residues 300–310 (TAVSGVRSPSP) are compositionally biased toward polar residues. Phosphoserine is present on residues S307, S309, and S531.

Belongs to the MIEAP family. As to quaternary structure, interacts (via coiled-coil domains) with BNIP3L (via BH3 domain). Interacts (via coiled-coil domains) with BNIP3 (via BH3 domain). Interacts with YWHAG/14-3-3 protein gamma; a protein that also plays a role in MALM.

Its subcellular location is the cytoplasm. It localises to the cytosol. The protein resides in the mitochondrion outer membrane. The protein localises to the mitochondrion matrix. Functionally, key regulator of mitochondrial quality that mediates the repairing or degradation of unhealthy mitochondria in response to mitochondrial damage. Mediator of mitochondrial protein catabolic process (also named MALM) by mediating the degradation of damaged proteins inside mitochondria by promoting the accumulation in the mitochondrial matrix of hydrolases that are characteristic of the lysosomal lumen. Also involved in mitochondrion degradation of damaged mitochondria by promoting the formation of vacuole-like structures (named MIV), which engulf and degrade unhealthy mitochondria by accumulating lysosomes. The physical interaction of SPATA18/MIEAP, BNIP3 and BNIP3L/NIX at the mitochondrial outer membrane regulates the opening of a pore in the mitochondrial double membrane in order to mediate the translocation of lysosomal proteins from the cytoplasm to the mitochondrial matrix. Binds cardiolipin. May form molecular condensates (non-membrane-bounded organelles) within mitochondria that compartmentalize and promote cardiolipin metabolism. This Sus scrofa (Pig) protein is Mitochondria-eating protein (SPATA18).